The following is a 794-amino-acid chain: Lon protease (794 aa).

In terms of domain architecture, Lon N-terminal spans 29 to 222 (VPLLPLRGVL…TLISIIQDEQ (194 aa)). 374 to 381 (GPPGVGKT) provides a ligand contact to ATP. In terms of domain architecture, Lon proteolytic spans 610-791 (TDQVGMATGL…DEVLEHALVG (182 aa)). Residues Ser-697 and Lys-740 contribute to the active site.

This sequence belongs to the peptidase S16 family. Homohexamer. Organized in a ring with a central cavity.

It is found in the cytoplasm. The enzyme catalyses Hydrolysis of proteins in presence of ATP.. Its function is as follows. ATP-dependent serine protease that mediates the selective degradation of mutant and abnormal proteins as well as certain short-lived regulatory proteins. Required for cellular homeostasis and for survival from DNA damage and developmental changes induced by stress. Degrades polypeptides processively to yield small peptide fragments that are 5 to 10 amino acids long. Binds to DNA in a double-stranded, site-specific manner. This is Lon protease from Bacillus thuringiensis (strain Al Hakam).